The following is a 502-amino-acid chain: ATP synthase subunit alpha (502 aa).

169–176 contacts ATP; it reads GDRQTGKT.

Belongs to the ATPase alpha/beta chains family. In terms of assembly, F-type ATPases have 2 components, CF(1) - the catalytic core - and CF(0) - the membrane proton channel. CF(1) has five subunits: alpha(3), beta(3), gamma(1), delta(1), epsilon(1). CF(0) has three main subunits: a(1), b(2) and c(9-12). The alpha and beta chains form an alternating ring which encloses part of the gamma chain. CF(1) is attached to CF(0) by a central stalk formed by the gamma and epsilon chains, while a peripheral stalk is formed by the delta and b chains.

The protein localises to the cell inner membrane. The catalysed reaction is ATP + H2O + 4 H(+)(in) = ADP + phosphate + 5 H(+)(out). In terms of biological role, produces ATP from ADP in the presence of a proton gradient across the membrane. The alpha chain is a regulatory subunit. This chain is ATP synthase subunit alpha, found in Solidesulfovibrio magneticus (strain ATCC 700980 / DSM 13731 / RS-1) (Desulfovibrio magneticus).